The primary structure comprises 138 residues: Transcription antitermination protein NusB (138 aa).

This sequence belongs to the NusB family.

Functionally, involved in transcription antitermination. Required for transcription of ribosomal RNA (rRNA) genes. Binds specifically to the boxA antiterminator sequence of the ribosomal RNA (rrn) operons. This is Transcription antitermination protein NusB from Helicobacter pylori (strain P12).